A 120-amino-acid chain; its full sequence is Aspartate 1-decarboxylase (120 aa).

S25 serves as the catalytic Schiff-base intermediate with substrate; via pyruvic acid. At S25 the chain carries Pyruvic acid (Ser). Position 57 (T57) interacts with substrate. Y58 functions as the Proton donor in the catalytic mechanism. 73–75 serves as a coordination point for substrate; it reads GAA.

Belongs to the PanD family. In terms of assembly, heterooctamer of four alpha and four beta subunits. Pyruvate is required as a cofactor. In terms of processing, is synthesized initially as an inactive proenzyme, which is activated by self-cleavage at a specific serine bond to produce a beta-subunit with a hydroxyl group at its C-terminus and an alpha-subunit with a pyruvoyl group at its N-terminus.

Its subcellular location is the cytoplasm. It carries out the reaction L-aspartate + H(+) = beta-alanine + CO2. The protein operates within cofactor biosynthesis; (R)-pantothenate biosynthesis; beta-alanine from L-aspartate: step 1/1. Its function is as follows. Catalyzes the pyruvoyl-dependent decarboxylation of aspartate to produce beta-alanine. The protein is Aspartate 1-decarboxylase of Deinococcus deserti (strain DSM 17065 / CIP 109153 / LMG 22923 / VCD115).